The sequence spans 495 residues: WD repeat-containing protein 37 (495 aa).

Composition is skewed to polar residues over residues M1–Q13 and S22–S31. Positions M1 to L50 are disordered. Positions E32 to D47 are enriched in basic and acidic residues. WD repeat units follow at residues G154–K194 and G197–Q236. The disordered stretch occupies residues P237–S266. Acidic residues predominate over residues G246–V264. WD repeat units lie at residues S280–S319, G322–V361, G366–A404, R407–L446, and G453–E494.

As to quaternary structure, forms homodimers. Interacts with PACS1. Interacts with PACS2.

Its subcellular location is the cytoplasm. The protein resides in the nucleus. In terms of biological role, required for normal ER Ca2+ handling in lymphocytes. Together with PACS1, it plays an essential role in stabilizing peripheral lymphocyte populations. The protein is WD repeat-containing protein 37 (WDR37) of Pongo abelii (Sumatran orangutan).